The following is a 772-amino-acid chain: Glucocorticoid receptor (772 aa).

Positions 1 to 15 (MDSKESLSPPGREEV) are enriched in basic and acidic residues. Positions 1–22 (MDSKESLSPPGREEVPSSVLRP) are disordered. The modulating stretch occupies residues 1–415 (MDSKESLSPP…TTAAGPPPKL (415 aa)). Residue arginine 25 is modified to Omega-N-methylarginine. A disordered region spans residues 39–82 (APVRVPASSPSLAPAAQPDSKQQRLAVDFPKGSASNAQQPDLSR). Residues 44–58 (PASSPSLAPAAQPDS) show a composition bias toward low complexity. Phosphoserine occurs at positions 47, 115, 136, and 143. The tract at residues 132–186 (NRSASGADNPRSTAPAAGSAAPTEGFPKTHSDLASERQNPKGQTGGSAGSAKLHP) is disordered. Residues 143–156 (STAPAAGSAAPTEG) are compositionally biased toward low complexity. The segment covering 158-170 (PKTHSDLASERQN) has biased composition (basic and acidic residues). Residues serine 203, serine 211, and serine 226 each carry the phosphoserine modification. Lysine 258 participates in a covalent cross-link: Glycyl lysine isopeptide (Lys-Gly) (interchain with G-Cter in SUMO2). Glycyl lysine isopeptide (Lys-Gly) (interchain with G-Cter in SUMO); alternate cross-links involve residues lysine 277 and lysine 293. Glycyl lysine isopeptide (Lys-Gly) (interchain with G-Cter in SUMO2); alternate cross-links involve residues lysine 277 and lysine 293. A phosphoserine mark is found at serine 307 and serine 400. Lysine 414 is covalently cross-linked (Glycyl lysine isopeptide (Lys-Gly) (interchain with G-Cter in ubiquitin)). 2 consecutive NR C4-type zinc fingers follow at residues 416 to 436 (CLVC…CGSC) and 452 to 476 (CAGR…YRKC). The segment at residues 416–481 (CLVCSDEASG…RYRKCLQAGM (66 aa)) is a DNA-binding region (nuclear receptor). Residues lysine 475, lysine 487, lysine 489, and lysine 490 each carry the N6-acetyllysine modification. The tract at residues 480 to 772 (GMNLEARKTK…NIKKLLFHQK (293 aa)) is interaction with CLOCK. The segment at 482-518 (NLEARKTKKKIKGIQQTSTGVSQETSENPSNRTVVPA) is hinge. The segment at 494–513 (GIQQTSTGVSQETSENPSNR) is disordered. The segment covering 499–513 (STGVSQETSENPSNR) has biased composition (polar residues). Residues 519-753 (ALPQLTPTLV…FPEMLAEIIT (235 aa)) form the NR LBD domain. The tract at residues 527-692 (LVSLLEVIEP…EIRMTYIKEL (166 aa)) is interaction with CRY1. Lysine 698 participates in a covalent cross-link: Glycyl lysine isopeptide (Lys-Gly) (interchain with G-Cter in SUMO).

The protein belongs to the nuclear hormone receptor family. NR3 subfamily. In terms of assembly, heteromultimeric cytoplasmic complex with HSP90AA1, HSPA1A/HSPA1B, and FKBP5 or another immunophilin such as PPID, STIP1, or the immunophilin homolog PPP5C. Upon ligand binding FKBP5 dissociates from the complex and FKBP4 takes its place, thereby linking the complex to dynein and mediating transport to the nucleus, where the complex dissociates. Probably forms a complex composed of chaperones HSP90 and HSP70, co-chaperones CDC37, PPP5C, TSC1 and client protein TSC2, CDK4, AKT, RAF1 and NR3C1; this complex does not contain co-chaperones STIP1/HOP and PTGES3/p23. Directly interacts with UNC45A. Binds to DNA as a homodimer, and as heterodimer with NR3C2 or the retinoid X receptor. Binds STAT5A and STAT5B homodimers and heterodimers. Interacts with NRIP1, POU2F1, POU2F2 and TRIM28. Interacts with several coactivator complexes, including the SMARCA4 complex, CREBBP/EP300, TADA2L (Ada complex) and p160 coactivators such as NCOA2 and NCOA6. Interaction with BAG1 inhibits transactivation. Interacts with HEXIM1 and TGFB1I1. Interacts with NCOA1. Interacts with NCOA3, SMARCA4, SMARCC1, SMARCD1, and SMARCE1. Interacts with CLOCK, CRY1 and CRY2 in a ligand-dependent fashion. Interacts with CIART. Interacts with RWDD3. Interacts with UBE2I/UBC9 and this interaction is enhanced in the presence of RWDD3. Interacts with GRIP1. Interacts with NR4A3 (via nuclear receptor DNA-binding domain), represses transcription activity of NR4A3 on the POMC promoter Nur response element (NurRE). Directly interacts with PNRC2 to attract and form a complex with UPF1 and DCP1A; the interaction leads to rapid mRNA degradation. Interacts with GSK3B. Interacts with FNIP1 and FNIP2. Interacts (via C-terminus) with HNRNPU (via C-terminus). Interacts with MCM3AP. Interacts (via domain NR LBD) with HSP90AA1 and HSP90AB1. In the absence of hormonal ligand, interacts with TACC1. Interacts (via NR LBD domain) with ZNF764 (via KRAB domain); the interaction regulates transcription factor activity of NR3C1 by directing its actions toward certain biologic pathways. Acetylation by CLOCK reduces its binding to glucocorticoid response elements and its transcriptional activity. Post-translationally, increased proteasome-mediated degradation in response to glucocorticoids. In terms of processing, phosphorylated in the absence of hormone; becomes hyperphosphorylated in the presence of glucocorticoid. The Ser-203, Ser-226 and Ser-399-phosphorylated forms are mainly cytoplasmic, and the Ser-211-phosphorylated form is nuclear. Phosphorylation at Ser-211 increases transcriptional activity. Phosphorylation at Ser-203, Ser-226 and Ser-399 decreases signaling capacity. Phosphorylation at Ser-399 may protect from glucocorticoid-induced apoptosis. Phosphorylation at Ser-203 and Ser-211 is not required in regulation of chromosome segregation. May be dephosphorylated by PPP5C, attenuates NR3C1 action. Ubiquitinated by UBR5, leading to its degradation: UBR5 specifically recognizes and binds ligand-bound NR3C1 when it is not associated with coactivators (NCOAs). In presence of NCOAs, the UBR5-degron is not accessible, preventing its ubiquitination and degradation. Post-translationally, sumoylation at Lys-277 and Lys-293 negatively regulates its transcriptional activity. Sumoylation at Lys-698 positively regulates its transcriptional activity in the presence of RWDD3. Sumoylation at Lys-277 and Lys-293 is dispensable whereas sumoylation at Lys-698 is critical for the stimulatory effect of RWDD3 on its transcriptional activity. Heat shock increases sumoylation in a RWDD3-dependent manner.

The protein localises to the cytoplasm. The protein resides in the nucleus. It localises to the mitochondrion. Its subcellular location is the cytoskeleton. It is found in the spindle. The protein localises to the microtubule organizing center. The protein resides in the centrosome. It localises to the chromosome. Its subcellular location is the nucleoplasm. Its function is as follows. Receptor for glucocorticoids (GC). Has a dual mode of action: as a transcription factor that binds to glucocorticoid response elements (GRE), both for nuclear and mitochondrial DNA, and as a modulator of other transcription factors. Affects inflammatory responses, cellular proliferation and differentiation in target tissues. Involved in chromatin remodeling. Plays a role in rapid mRNA degradation by binding to the 5' UTR of target mRNAs and interacting with PNRC2 in a ligand-dependent manner which recruits the RNA helicase UPF1 and the mRNA-decapping enzyme DCP1A, leading to RNA decay. Could act as a coactivator for STAT5-dependent transcription upon growth hormone (GH) stimulation and could reveal an essential role of hepatic GR in the control of body growth. Mediates glucocorticoid-induced apoptosis. Promotes accurate chromosome segregation during mitosis. May act as a tumor suppressor. May play a negative role in adipogenesis through the regulation of lipolytic and antilipogenic gene expression. The polypeptide is Glucocorticoid receptor (NR3C1) (Oryctolagus cuniculus (Rabbit)).